We begin with the raw amino-acid sequence, 599 residues long: DNA primase (599 aa).

Residues 40–64 (CPFHGENTPSFSVSPDKQLYHCFGC) form a CHC2-type zinc finger. A Toprim domain is found at 259–342 (NEAVLFEGYV…KVAMIPDGLD (84 aa)). Residues Glu265, Asp309, and Asp311 each coordinate Mg(2+).

The protein belongs to the DnaG primase family. In terms of assembly, monomer. Interacts with DnaB. Zn(2+) is required as a cofactor. Requires Mg(2+) as cofactor.

It carries out the reaction ssDNA + n NTP = ssDNA/pppN(pN)n-1 hybrid + (n-1) diphosphate.. Its function is as follows. RNA polymerase that catalyzes the synthesis of short RNA molecules used as primers for DNA polymerase during DNA replication. This Halalkalibacterium halodurans (strain ATCC BAA-125 / DSM 18197 / FERM 7344 / JCM 9153 / C-125) (Bacillus halodurans) protein is DNA primase.